The primary structure comprises 80 residues: Cell division activator CedA (80 aa).

Belongs to the CedA family.

Activates the cell division inhibited by chromosomal DNA over-replication. The chain is Cell division activator CedA from Salmonella typhimurium (strain LT2 / SGSC1412 / ATCC 700720).